The chain runs to 201 residues: MATAVAGPEIERLIQLLARLPGLGPRSARRAALHLIKKRDALMTPLASALQVAIDKIEVCKSCGNIDTRNPCTVCTDPRRDPSIIVVVADVADLWALERASATNGRYHVLGATLSPLDGVGPDDLTIDALVARAHDPAVSEIILALNATVDGQTTAHYVTDLLQEAGVKVTRLAHGVPVGGELDYLDEGTLSAAMRQRTLF.

The segment at C60–C75 adopts a C4-type zinc-finger fold. Positions S83 to P178 constitute a Toprim domain.

Belongs to the RecR family.

In terms of biological role, may play a role in DNA repair. It seems to be involved in an RecBC-independent recombinational process of DNA repair. It may act with RecF and RecO. The polypeptide is Recombination protein RecR (Rhodopseudomonas palustris (strain BisB5)).